Here is a 278-residue protein sequence, read N- to C-terminus: MQVHERSHTGGHTCQCNHGSEKKAPATGKVHSEGGSARMSLLILVSIFLCAASIMFLVYKHFPQLSEEEREKIKVPRDMDDAKALGKVLSKYKDTFYVEVLVAYFTTYIFLQTFAIPGSIFLSILSGFLYPFPLALFLVCLCSGLGASFSYLLSYLVGRPVVYKYLSDKAIKWSQQVERHRDHLINYIIFLRITPFLPNWFINITSPVINVPLKVFFLGTFIGVAPPSFVAIKAGTTLYQLTTAGEAVSWNSVIILMVLAVLSILPAIFQKKLKKKFE.

Residues 1–31 (MQVHERSHTGGHTCQCNHGSEKKAPATGKVH) are disordered. 6 helical membrane passes run 39-59 (MSLL…FLVY), 96-116 (FYVE…TFAI), 132-154 (FPLA…YLLS), 184-204 (LINY…FINI), 212-232 (PLKV…FVAI), and 249-269 (SWNS…PAIF). Positions 127–238 (GFLYPFPLAL…FVAIKAGTTL (112 aa)) are VTT domain; required for its function in autophagy.

It belongs to the TMEM41 family.

It is found in the endoplasmic reticulum membrane. It localises to the endomembrane system. The catalysed reaction is a 1,2-diacyl-sn-glycero-3-phospho-L-serine(in) = a 1,2-diacyl-sn-glycero-3-phospho-L-serine(out). The enzyme catalyses cholesterol(in) = cholesterol(out). It catalyses the reaction a 1,2-diacyl-sn-glycero-3-phosphocholine(in) = a 1,2-diacyl-sn-glycero-3-phosphocholine(out). It carries out the reaction a 1,2-diacyl-sn-glycero-3-phosphoethanolamine(in) = a 1,2-diacyl-sn-glycero-3-phosphoethanolamine(out). Its function is as follows. Phospholipid scramblase involved in lipid homeostasis and membrane dynamics processes. Has phospholipid scramblase activity toward cholesterol and phosphatidylserine, as well as phosphatidylethanolamine and phosphatidylcholine. Required for autophagosome formation: participates in early stages of autophagosome biogenesis at the endoplasmic reticulum (ER) membrane by reequilibrating the leaflets of the ER as lipids are extracted by atg2 (atg2a or atg2b) to mediate autophagosome assembly. In addition to autophagy, involved in other processes in which phospholipid scramblase activity is required. Required for normal motor neuron development. This is Transmembrane protein 41B from Xenopus tropicalis (Western clawed frog).